Reading from the N-terminus, the 464-residue chain is ATP synthase subunit beta (464 aa).

152–159 (GGAGVGKT) is a binding site for ATP.

This sequence belongs to the ATPase alpha/beta chains family. F-type ATPases have 2 components, CF(1) - the catalytic core - and CF(0) - the membrane proton channel. CF(1) has five subunits: alpha(3), beta(3), gamma(1), delta(1), epsilon(1). CF(0) has three main subunits: a(1), b(2) and c(9-12). The alpha and beta chains form an alternating ring which encloses part of the gamma chain. CF(1) is attached to CF(0) by a central stalk formed by the gamma and epsilon chains, while a peripheral stalk is formed by the delta and b chains.

The protein resides in the cell membrane. The enzyme catalyses ATP + H2O + 4 H(+)(in) = ADP + phosphate + 5 H(+)(out). Its function is as follows. Produces ATP from ADP in the presence of a proton gradient across the membrane. The catalytic sites are hosted primarily by the beta subunits. This Ureaplasma parvum serovar 3 (strain ATCC 27815 / 27 / NCTC 11736) protein is ATP synthase subunit beta.